A 183-amino-acid chain; its full sequence is Ferritin heavy chain (183 aa).

An N-acetylmethionine modification is found at Met-1. Thr-2 bears the N-acetylthreonine; in Ferritin heavy chain, N-terminally processed mark. Residues 11-160 (QNYHQDSEAA…DHVTNLRKMG (150 aa)) form the Ferritin-like diiron domain. Fe cation contacts are provided by Glu-28, Glu-63, His-66, Glu-108, and Gln-142. 2 positions are modified to phosphoserine: Ser-179 and Ser-183.

This sequence belongs to the ferritin family. Oligomer of 24 subunits. There are two types of subunits: L (light) chain and H (heavy) chain. The major chain can be light or heavy, depending on the species and tissue type. The functional molecule forms a roughly spherical shell with a diameter of 12 nm and contains a central cavity into which the insoluble mineral iron core is deposited. Interacts with NCOA4; NCOA4 promotes targeting of the iron-binding ferritin complex to autolysosomes following starvation or iron depletion.

The protein resides in the cytoplasm. Its subcellular location is the lysosome. The protein localises to the cytoplasmic vesicle. It localises to the autophagosome. The enzyme catalyses 4 Fe(2+) + O2 + 4 H(+) = 4 Fe(3+) + 2 H2O. In terms of biological role, stores iron in a soluble, non-toxic, readily available form. Important for iron homeostasis. Has ferroxidase activity. Iron is taken up in the ferrous form and deposited as ferric hydroxides after oxidation. Also plays a role in delivery of iron to cells. Mediates iron uptake in capsule cells of the developing kidney. Delivery to lysosomes is mediated by the cargo receptor NCOA4 for autophagic degradation and release of iron. This chain is Ferritin heavy chain (FTH1), found in Canis lupus familiaris (Dog).